A 256-amino-acid chain; its full sequence is 1-(5-phosphoribosyl)-5-[(5-phosphoribosylamino)methylideneamino] imidazole-4-carboxamide isomerase (256 aa).

The Proton acceptor role is filled by D8. The Proton donor role is filled by D130.

Belongs to the HisA/HisF family.

Its subcellular location is the cytoplasm. It catalyses the reaction 1-(5-phospho-beta-D-ribosyl)-5-[(5-phospho-beta-D-ribosylamino)methylideneamino]imidazole-4-carboxamide = 5-[(5-phospho-1-deoxy-D-ribulos-1-ylimino)methylamino]-1-(5-phospho-beta-D-ribosyl)imidazole-4-carboxamide. It participates in amino-acid biosynthesis; L-histidine biosynthesis; L-histidine from 5-phospho-alpha-D-ribose 1-diphosphate: step 4/9. The polypeptide is 1-(5-phosphoribosyl)-5-[(5-phosphoribosylamino)methylideneamino] imidazole-4-carboxamide isomerase (Chlorobium phaeovibrioides (strain DSM 265 / 1930) (Prosthecochloris vibrioformis (strain DSM 265))).